Reading from the N-terminus, the 347-residue chain is MQGRVAGSCAPLGLLLVCLHLPGLFARSIGVVEEKVSQNLGTNLPQLGQPSSTGPSNSEHPQPALDPRSNDLARVPLKLSAPPSDGFPPAGGSAVQRWPPSWGLPAMDSWPPEDPWQMMAAAAEDRLGEALPEELSYLSSAVALAPGSGPLPGESSPDATGLSPEASLLHQDSESRRLPRSNSLGAGGKILSQRPPWSLIHRVLPDHPWGTLNPSVSWGGGGPGTGWGTRPMPHPEGIWGINNQPPGTSWGNINRYPGGSWGNINRYPGDSWGNNNRYPGGSWGNINRYPGGSWGNINRYPGGSWGNIHLYPGINNPFPPGVLRPPGSSWNIPAGFPNPPSPRLQWG.

The signal sequence occupies residues 1 to 26; that stretch reads MQGRVAGSCAPLGLLLVCLHLPGLFA. A compositionally biased stretch (polar residues) spans 41–60; that stretch reads GTNLPQLGQPSSTGPSNSEH. 2 disordered regions span residues 41 to 110 and 148 to 189; these read GTNL…MDSW and SGPL…AGGK. A compositionally biased stretch (low complexity) spans 148–157; the sequence is SGPLPGESSP.

As to quaternary structure, binds to numerous extracellular matrix proteins.

The protein localises to the secreted. It localises to the extracellular space. The protein resides in the extracellular matrix. This is an uncharacterized protein from Pan troglodytes (Chimpanzee).